Consider the following 136-residue polypeptide: Large ribosomal subunit protein uL16 (136 aa).

It belongs to the universal ribosomal protein uL16 family. Part of the 50S ribosomal subunit.

Functionally, binds 23S rRNA and is also seen to make contacts with the A and possibly P site tRNAs. The polypeptide is Large ribosomal subunit protein uL16 (Shewanella woodyi (strain ATCC 51908 / MS32)).